Consider the following 460-residue polypeptide: Bifunctional protein GlmU (460 aa).

The pyrophosphorylase stretch occupies residues 1-232; sequence MALNVVILAA…AIEVEGANNR (232 aa). Residues 8–11, Lys22, Gln73, 78–79, 100–102, Gly137, Glu157, Asn172, and Asn230 each bind UDP-N-acetyl-alpha-D-glucosamine; these read LAAG, GT, and YGD. Residue Asp102 coordinates Mg(2+). A Mg(2+)-binding site is contributed by Asn230. Residues 233–253 are linker; that stretch reads VQLAQLERAYQAREAEKLMLA. The N-acetyltransferase stretch occupies residues 254 to 460; sequence GANLRDPSRI…GWQRPVKIKK (207 aa). The UDP-N-acetyl-alpha-D-glucosamine site is built by Arg336 and Lys354. The active-site Proton acceptor is the His366. UDP-N-acetyl-alpha-D-glucosamine is bound by residues Tyr369 and Asn380. Acetyl-CoA is bound by residues Ala383, 389–390, Ser408, Ala426, and Arg443; that span reads NY.

This sequence in the N-terminal section; belongs to the N-acetylglucosamine-1-phosphate uridyltransferase family. The protein in the C-terminal section; belongs to the transferase hexapeptide repeat family. As to quaternary structure, homotrimer. The cofactor is Mg(2+).

It is found in the cytoplasm. The enzyme catalyses alpha-D-glucosamine 1-phosphate + acetyl-CoA = N-acetyl-alpha-D-glucosamine 1-phosphate + CoA + H(+). The catalysed reaction is N-acetyl-alpha-D-glucosamine 1-phosphate + UTP + H(+) = UDP-N-acetyl-alpha-D-glucosamine + diphosphate. The protein operates within nucleotide-sugar biosynthesis; UDP-N-acetyl-alpha-D-glucosamine biosynthesis; N-acetyl-alpha-D-glucosamine 1-phosphate from alpha-D-glucosamine 6-phosphate (route II): step 2/2. It participates in nucleotide-sugar biosynthesis; UDP-N-acetyl-alpha-D-glucosamine biosynthesis; UDP-N-acetyl-alpha-D-glucosamine from N-acetyl-alpha-D-glucosamine 1-phosphate: step 1/1. Its pathway is bacterial outer membrane biogenesis; LPS lipid A biosynthesis. In terms of biological role, catalyzes the last two sequential reactions in the de novo biosynthetic pathway for UDP-N-acetylglucosamine (UDP-GlcNAc). The C-terminal domain catalyzes the transfer of acetyl group from acetyl coenzyme A to glucosamine-1-phosphate (GlcN-1-P) to produce N-acetylglucosamine-1-phosphate (GlcNAc-1-P), which is converted into UDP-GlcNAc by the transfer of uridine 5-monophosphate (from uridine 5-triphosphate), a reaction catalyzed by the N-terminal domain. This Shewanella baltica (strain OS223) protein is Bifunctional protein GlmU.